A 503-amino-acid polypeptide reads, in one-letter code: Aminoaldehyde dehydrogenase 2, peroxisomal (503 aa).

The Na(+) site is built by isoleucine 28 and aspartate 99. Positions 161 and 185 each coordinate NAD(+). Leucine 189 lines the Na(+) pocket. Serine 239 contacts NAD(+). Glutamate 260 acts as the Proton acceptor in catalysis. Cysteine 294 acts as the Nucleophile in catalysis. The short motif at 501–503 (AKL) is the Microbody targeting signal element.

It belongs to the aldehyde dehydrogenase family. Forms homodimers.

The protein resides in the peroxisome. It carries out the reaction 3-aminopropanal + NAD(+) + H2O = beta-alanine + NADH + 2 H(+). It catalyses the reaction 4-aminobutanal + NAD(+) + H2O = 4-aminobutanoate + NADH + 2 H(+). The enzyme catalyses 4-guanidinobutanal + NAD(+) + H2O = 4-guanidinobutanoate + NADH + 2 H(+). It functions in the pathway amine and polyamine biosynthesis; betaine biosynthesis via choline pathway; betaine from betaine aldehyde: step 1/1. Dehydrogenase that catalyzes the oxidation of several aminoaldehydes. Metabolizes and detoxifies aldehyde products of polyamine degradation to non-toxic amino acids. Catalyzes the oxidation of 3-aminopropanal to beta-alanine. Catalyzes the oxidation of 4-aminobutanal to 4-aminobutanoate. Catalyzes the oxidation of 4-guanidinobutanal to 4-guanidinobutanoate. The sequence is that of Aminoaldehyde dehydrogenase 2, peroxisomal from Pisum sativum (Garden pea).